The sequence spans 289 residues: Thymidylate synthase (289 aa).

Residues arginine 21 and 150-151 (RR) each bind dUMP. Cysteine 170 (nucleophile) is an active-site residue. DUMP contacts are provided by residues 191–194 (RSAD), asparagine 202, and 232–234 (HIY). (6R)-5,10-methylene-5,6,7,8-tetrahydrofolate is bound at residue aspartate 194. Position 288 (alanine 288) interacts with (6R)-5,10-methylene-5,6,7,8-tetrahydrofolate.

The protein belongs to the thymidylate synthase family. Bacterial-type ThyA subfamily. Homodimer.

The protein localises to the cytoplasm. The catalysed reaction is dUMP + (6R)-5,10-methylene-5,6,7,8-tetrahydrofolate = 7,8-dihydrofolate + dTMP. It participates in pyrimidine metabolism; dTTP biosynthesis. Its function is as follows. Catalyzes the reductive methylation of 2'-deoxyuridine-5'-monophosphate (dUMP) to 2'-deoxythymidine-5'-monophosphate (dTMP) while utilizing 5,10-methylenetetrahydrofolate (mTHF) as the methyl donor and reductant in the reaction, yielding dihydrofolate (DHF) as a by-product. This enzymatic reaction provides an intracellular de novo source of dTMP, an essential precursor for DNA biosynthesis. The protein is Thymidylate synthase of Malacoplasma penetrans (strain HF-2) (Mycoplasma penetrans).